The primary structure comprises 485 residues: Pup--protein ligase (485 aa).

Residue Glu33 participates in Mg(2+) binding. Position 76 (Arg76) interacts with ATP. Tyr78 contributes to the Mg(2+) binding site. Asp80 (proton acceptor) is an active-site residue. Glu86 serves as a coordination point for Mg(2+). The ATP site is built by Thr89 and Trp451.

This sequence belongs to the Pup ligase/Pup deamidase family. Pup-conjugating enzyme subfamily.

It catalyses the reaction ATP + [prokaryotic ubiquitin-like protein]-L-glutamate + [protein]-L-lysine = ADP + phosphate + N(6)-([prokaryotic ubiquitin-like protein]-gamma-L-glutamyl)-[protein]-L-lysine.. Its pathway is protein degradation; proteasomal Pup-dependent pathway. It participates in protein modification; protein pupylation. Catalyzes the covalent attachment of the prokaryotic ubiquitin-like protein modifier Pup to the proteasomal substrate proteins, thereby targeting them for proteasomal degradation. This tagging system is termed pupylation. The ligation reaction involves the side-chain carboxylate of the C-terminal glutamate of Pup and the side-chain amino group of a substrate lysine. The sequence is that of Pup--protein ligase from Bifidobacterium longum subsp. infantis (strain ATCC 15697 / DSM 20088 / JCM 1222 / NCTC 11817 / S12).